The following is a 97-amino-acid chain: Putative septation protein SpoVG (97 aa).

The protein belongs to the SpoVG family.

Functionally, could be involved in septation. This chain is Putative septation protein SpoVG, found in Anaeromyxobacter sp. (strain Fw109-5).